The primary structure comprises 320 residues: Cell division protein FtsQ (320 aa).

The disordered stretch occupies residues 1-24; sequence MAQTIKRGGKGVRRATAARSAQRK. Over 1-52 the chain is Cytoplasmic; that stretch reads MAQTIKRGGKGVRRATAARSAQRKVQTARQQTGSVLDSVLRWLPFSEETLHR. A helical transmembrane segment spans residues 53–73; that stretch reads ILMTLILAAAAGLVWTVAVMA. Over 74–320 the chain is Periplasmic; sequence GIPALVSEQA…RAASAKSDEG (247 aa). One can recognise a POTRA domain in the interval 92–160; that stretch reads FKVSHLEVRG…DTLVIDIVER (69 aa). Residues 296-320 form a disordered region; it reads AAEKRAEEQARAEAKRAASAKSDEG.

The protein belongs to the FtsQ/DivIB family. FtsQ subfamily.

The protein localises to the cell inner membrane. Its function is as follows. Essential cell division protein. The sequence is that of Cell division protein FtsQ from Novosphingobium aromaticivorans (strain ATCC 700278 / DSM 12444 / CCUG 56034 / CIP 105152 / NBRC 16084 / F199).